The chain runs to 354 residues: Glycerol-3-phosphate dehydrogenase [NAD(+)], glycosomal (354 aa).

NAD(+) is bound by residues 15–20, phenylalanine 90, lysine 118, and alanine 150; that span reads GSGAFG. A substrate-binding site is contributed by lysine 118. Lysine 203 functions as the Proton acceptor in the catalytic mechanism. NAD(+) contacts are provided by arginine 267 and glutamate 293. Residue 267–268 coordinates substrate; sequence RN. A Microbody targeting signal motif is present at residues 352–354; sequence SKM.

It belongs to the NAD-dependent glycerol-3-phosphate dehydrogenase family.

The protein localises to the glycosome. It carries out the reaction sn-glycerol 3-phosphate + NAD(+) = dihydroxyacetone phosphate + NADH + H(+). The polypeptide is Glycerol-3-phosphate dehydrogenase [NAD(+)], glycosomal (GPD) (Trypanosoma brucei rhodesiense).